Consider the following 294-residue polypeptide: Small ribosomal subunit protein uS2 (294 aa).

Residues Arg-232–Gln-245 are compositionally biased toward basic and acidic residues. The disordered stretch occupies residues Arg-232 to Asn-294. The span at Glu-246–Glu-265 shows a compositional bias: low complexity.

This sequence belongs to the universal ribosomal protein uS2 family.

The sequence is that of Small ribosomal subunit protein uS2 from Desulfatibacillum aliphaticivorans.